The following is a 65-amino-acid chain: MPKMKTHRGAAKRFKVLKSGKVKRSKAYKSHLLTHKNAKRKRRLRKATYLVGGDAKNIRRLLPYS.

The protein belongs to the bacterial ribosomal protein bL35 family.

The sequence is that of Large ribosomal subunit protein bL35 from Thermoanaerobacter sp. (strain X514).